Here is a 1382-residue protein sequence, read N- to C-terminus: ATP-dependent RNA helicase TDRD9 (1382 aa).

Positions 36–62 are disordered; the sequence is AAREEVQRQDVAPGAGPAAQAPALAQA. Low complexity predominate over residues 47 to 62; the sequence is APGAGPAAQAPALAQA. The Helicase ATP-binding domain occupies 142 to 308; that stretch reads VSLIESNSVV…FAVPVQNKMN (167 aa). 155-162 is an ATP binding site; sequence GATGSGKS. The DEAH box signature appears at 254-257; sequence DEVH. Residues 377–544 enclose the Helicase C-terminal domain; the sequence is SGAQFVLERS…ILKVKLLDMG (168 aa). Positions 944 to 1004 constitute a Tudor domain; it reads HPHPDLVCLA…MEIPCQFLEL (61 aa).

It belongs to the DEAD box helicase family. DEAH subfamily. Interacts with piRNA-associated proteins PIWIL1 and PIWIL4.

Its subcellular location is the cytoplasm. It localises to the nucleus. The enzyme catalyses ATP + H2O = ADP + phosphate + H(+). ATP-binding RNA helicase required during spermatogenesis. Required to repress transposable elements and prevent their mobilization, which is essential for the germline integrity. Acts via the piRNA metabolic process, which mediates the repression of transposable elements during meiosis by forming complexes composed of piRNAs and Piwi proteins and governs the methylation and subsequent repression of transposons. Acts downstream of piRNA biogenesis: exclusively required for transposon silencing in the nucleus, suggesting that it acts as a nuclear effector in the nucleus together with PIWIL4. The chain is ATP-dependent RNA helicase TDRD9 from Homo sapiens (Human).